Consider the following 84-residue polypeptide: Kunitz-type serine protease inhibitor B6 (84 aa).

The N-terminal stretch at 1-24 is a signal peptide; the sequence is MSSGGLLLLLGLLTLWAELTPISS. Residues 31–81 enclose the BPTI/Kunitz inhibitor domain; that stretch reads CNLAPESGRCRGHLRRIYYNLESNKCKVFFYGGCGGNANNFETRDECRQTC. Cystine bridges form between cysteine 31–cysteine 81, cysteine 40–cysteine 64, and cysteine 56–cysteine 77.

The protein belongs to the venom Kunitz-type family. Expressed by the venom gland.

Its subcellular location is the secreted. In terms of biological role, serine protease inhibitor that inhibits trypsin. The protein is Kunitz-type serine protease inhibitor B6 of Daboia siamensis (Eastern Russel's viper).